The sequence spans 334 residues: Serine/threonine-protein kinase (334 aa).

Positions Phe53 to Thr333 constitute a Protein kinase domain. ATP is bound by residues Leu59–Val67 and Lys82. Asp167 functions as the Proton acceptor in the catalytic mechanism.

The protein belongs to the protein kinase superfamily. Ser/Thr protein kinase family.

It carries out the reaction L-seryl-[protein] + ATP = O-phospho-L-seryl-[protein] + ADP + H(+). It catalyses the reaction L-threonyl-[protein] + ATP = O-phospho-L-threonyl-[protein] + ADP + H(+). Its function is as follows. Able to phosphorylate in vitro the major virion phosphoprotein phosphorylated in vivo. The protein is Serine/threonine-protein kinase (PK) of Sus scrofa (Pig).